The following is a 187-amino-acid chain: Probable cobalt-precorrin-6B C(15)-methyltransferase (decarboxylating) (187 aa).

Residues threonine 17, 41-45 (GCGTG), aspartate 62, and glycine 91 contribute to the S-adenosyl-L-methionine site.

It belongs to the methyltransferase superfamily. Archaeal-type CbiT family.

It catalyses the reaction Co-precorrin-6B + S-adenosyl-L-methionine = Co-precorrin-7 + S-adenosyl-L-homocysteine + CO2. Its pathway is cofactor biosynthesis; adenosylcobalamin biosynthesis; cob(II)yrinate a,c-diamide from sirohydrochlorin (anaerobic route): step 8/10. Catalyzes the methylation of C-15 in cobalt-precorrin-6B followed by the decarboxylation of C-12 to form cobalt-precorrin-7. The protein is Probable cobalt-precorrin-6B C(15)-methyltransferase (decarboxylating) of Methanobrevibacter smithii (strain ATCC 35061 / DSM 861 / OCM 144 / PS).